The primary structure comprises 267 residues: Probable 3-methyl-2-oxobutanoate hydroxymethyltransferase (267 aa).

The protein belongs to the PanB family.

The enzyme catalyses 3-methyl-2-oxobutanoate + (6R)-5,10-methylene-5,6,7,8-tetrahydrofolate + H2O = 2-dehydropantoate + (6S)-5,6,7,8-tetrahydrofolate. It functions in the pathway cofactor biosynthesis; (R)-pantothenate biosynthesis; (R)-pantoate from 3-methyl-2-oxobutanoate: step 1/2. The chain is Probable 3-methyl-2-oxobutanoate hydroxymethyltransferase from Schizosaccharomyces pombe (strain 972 / ATCC 24843) (Fission yeast).